A 414-amino-acid chain; its full sequence is Cyclic di-GMP phosphodiesterase PA4108 (414 aa).

The region spanning 133–330 is the HD-GYP domain; it reads ISASVLRHPN…YPVGALVRLE (198 aa). 6 residues coordinate a divalent metal cation: histidine 160, histidine 192, aspartate 193, histidine 221, histidine 246, and histidine 247.

In terms of assembly, monomer.

It carries out the reaction 3',3'-c-di-GMP + 2 H2O = 2 GMP + 2 H(+). With respect to regulation, activated by Mg(2+) and Mn(2+). Functionally, phosphodiesterase (PDE) that catalyzes the hydrolysis of cyclic diguanylate (c-di-GMP) to GMP. Hydrolyzes c-di-GMP to GMP in a two-step reaction, via the linear intermediate 5'-phosphoguanylyl(3'-&gt;5')guanosine (pGpG). In vitro, can use pGpG as an alternative substrate and hydrolyze it into GMP. Acts in regulation of motility, synthesis of virulence determinants and biofilm architecture. The protein is Cyclic di-GMP phosphodiesterase PA4108 of Pseudomonas aeruginosa (strain ATCC 15692 / DSM 22644 / CIP 104116 / JCM 14847 / LMG 12228 / 1C / PRS 101 / PAO1).